The chain runs to 178 residues: Ribosome maturation factor RimM (178 aa).

In terms of domain architecture, PRC barrel spans 103 to 177 (SKDEYYFFEI…KIVVKVPEWL (75 aa)).

Belongs to the RimM family. In terms of assembly, binds ribosomal protein uS19.

It is found in the cytoplasm. An accessory protein needed during the final step in the assembly of 30S ribosomal subunit, possibly for assembly of the head region. Essential for efficient processing of 16S rRNA. May be needed both before and after RbfA during the maturation of 16S rRNA. It has affinity for free ribosomal 30S subunits but not for 70S ribosomes. The sequence is that of Ribosome maturation factor RimM from Thermosipho africanus (strain TCF52B).